The following is a 392-amino-acid chain: Galactokinase (392 aa).

Arg-37, Glu-43, His-44, and Asp-46 together coordinate alpha-D-galactose. Positions 136, 138, 140, and 141 each coordinate ATP. Asp-186 is a binding site for alpha-D-galactose. The active-site Proton acceptor is Asp-186. Ser-230 carries the post-translational modification Phosphoserine. An alpha-D-galactose-binding site is contributed by Tyr-236.

This sequence belongs to the GHMP kinase family. GalK subfamily. Homodimer.

It catalyses the reaction alpha-D-galactose + ATP = alpha-D-galactose 1-phosphate + ADP + H(+). It functions in the pathway carbohydrate metabolism; galactose metabolism. In terms of biological role, catalyzes the transfer of a phosphate from ATP to alpha-D-galactose and participates in the first committed step in the catabolism of galactose. The sequence is that of Galactokinase (GALK1) from Bos taurus (Bovine).